A 378-amino-acid polypeptide reads, in one-letter code: uncharacterized protein (378 aa).

The region spanning 208–317 is the Guanylate cyclase domain; sequence GIGFADLSSF…NPVNLAARLV (110 aa).

This sequence belongs to the adenylyl cyclase class-4/guanylyl cyclase family.

This is an uncharacterized protein from Mycobacterium bovis (strain ATCC BAA-935 / AF2122/97).